We begin with the raw amino-acid sequence, 278 residues long: Deoxyribonuclease-1-like 2 (278 aa).

The signal sequence occupies residues 1–21; the sequence is MGWPWAPLTAVWALGVMGATA. Catalysis depends on residues Glu99 and His150. Cys189 and Cys225 are oxidised to a cystine.

It belongs to the DNase I family. Mg(2+) is required as a cofactor. Requires Ca(2+) as cofactor.

The protein localises to the cytoplasm. It localises to the secreted. In terms of biological role, divalent cation-dependent acid DNA endonuclease involved in the breakdown of the nucleus during corneocyte formation of epidermal keratinocytes. May play an immune role by eliminating harmful DNA released into the extracellular environment by damaged epidermal cells. The chain is Deoxyribonuclease-1-like 2 (Dnase1l2) from Mus musculus (Mouse).